The sequence spans 405 residues: Indoleamine 2,3-dioxygenase 2 (405 aa).

A heme-binding site is contributed by His347.

It belongs to the indoleamine 2,3-dioxygenase family. Heme is required as a cofactor. In terms of tissue distribution, expressed mainly in antigen-presenting immune cells, liver, kidney, brain, and placenta. Highly expressed in kidney, followed by epididymis and liver (at protein level). Detected in the tails of the spermatozoa in the testis and in the kidney tubules (at protein level). Constitutively expressed in brain.

The catalysed reaction is L-tryptophan + O2 = N-formyl-L-kynurenine. It participates in amino-acid degradation; L-tryptophan degradation via kynurenine pathway; L-kynurenine from L-tryptophan: step 1/2. Its activity is regulated as follows. Activity is inhibited by D-1MT (1-methyl-D-tryptophan) and MTH-trp (methylthiohydantoin-DL-tryptophan) but not L-1MT (1-methyl-L-tryptophan). Its function is as follows. Catalyzes the first and rate-limiting step in the kynurenine pathway of tryptophan catabolism. Involved in immune regulation. This Mus musculus (Mouse) protein is Indoleamine 2,3-dioxygenase 2.